We begin with the raw amino-acid sequence, 240 residues long: 1-(5-phosphoribosyl)-5-[(5-phosphoribosylamino)methylideneamino] imidazole-4-carboxamide isomerase 2 (240 aa).

Aspartate 8 acts as the Proton acceptor in catalysis. Residue aspartate 129 is the Proton donor of the active site.

It belongs to the HisA/HisF family.

The protein localises to the cytoplasm. It carries out the reaction 1-(5-phospho-beta-D-ribosyl)-5-[(5-phospho-beta-D-ribosylamino)methylideneamino]imidazole-4-carboxamide = 5-[(5-phospho-1-deoxy-D-ribulos-1-ylimino)methylamino]-1-(5-phospho-beta-D-ribosyl)imidazole-4-carboxamide. Its pathway is amino-acid biosynthesis; L-histidine biosynthesis; L-histidine from 5-phospho-alpha-D-ribose 1-diphosphate: step 4/9. In Ruegeria sp. (strain TM1040) (Silicibacter sp.), this protein is 1-(5-phosphoribosyl)-5-[(5-phosphoribosylamino)methylideneamino] imidazole-4-carboxamide isomerase 2.